Reading from the N-terminus, the 41-residue chain is Large ribosomal subunit protein bL36 (41 aa).

The protein belongs to the bacterial ribosomal protein bL36 family.

The protein is Large ribosomal subunit protein bL36 of Parvibaculum lavamentivorans (strain DS-1 / DSM 13023 / NCIMB 13966).